The primary structure comprises 276 residues: Malonyl-[acyl-carrier protein] O-methyltransferase (276 aa).

This sequence belongs to the methyltransferase superfamily.

The enzyme catalyses malonyl-[ACP] + S-adenosyl-L-methionine = malonyl-[ACP] methyl ester + S-adenosyl-L-homocysteine. Its pathway is cofactor biosynthesis; biotin biosynthesis. Its function is as follows. Converts the free carboxyl group of a malonyl-thioester to its methyl ester by transfer of a methyl group from S-adenosyl-L-methionine (SAM). It allows to synthesize pimeloyl-ACP via the fatty acid synthetic pathway. The sequence is that of Malonyl-[acyl-carrier protein] O-methyltransferase from Paenibacillus sp. (strain JDR-2).